The sequence spans 123 residues: NADH dehydrogenase [ubiquinone] 1 beta subcomplex subunit 7 (123 aa).

The segment at 1 to 32 (MGTKLSVSLEGASTPETAPRVDRPPTFDPQYG) is disordered. The region spanning 59 to 102 (RDYCAHHLISLMKCQTQNAPFAGHACDGERGAWDKCEYDDHIMR) is the CHCH domain. Short sequence motifs (cx9C motif) lie at residues 62 to 72 (CAHHLISLMKC) and 84 to 94 (CDGERGAWDKC). 2 disulfide bridges follow: C62/C94 and C72/C84.

Belongs to the complex I NDUFB7 subunit family. As to quaternary structure, complex I is composed of 45 different subunits.

It is found in the mitochondrion. The protein resides in the mitochondrion inner membrane. It localises to the mitochondrion intermembrane space. Accessory subunit of the mitochondrial membrane respiratory chain NADH dehydrogenase (Complex I), that is believed not to be involved in catalysis. Complex I functions in the transfer of electrons from NADH to the respiratory chain. The immediate electron acceptor for the enzyme is believed to be ubiquinone. This Caenorhabditis elegans protein is NADH dehydrogenase [ubiquinone] 1 beta subcomplex subunit 7.